Here is a 549-residue protein sequence, read N- to C-terminus: Cation/acetate symporter ActP (549 aa).

The next 13 helical transmembrane spans lie at 33–53, 77–97, 103–123, 148–168, 183–203, 206–226, 262–282, 303–323, 355–375, 404–424, 428–448, 464–484, and 493–513; these read WQAIIMFLIFVVFTLGITYWA, LAIAGDYMSAASFLGISALVF, GLIYSLGFLVGWPIILFLIAE, ILSACGSLVVVALYLIAQMVG, IAVVLVGVLMMMYVLFGGMLA, WVQIIKAVLLLFGASFMAFMV, ISALSLGLGLMFGTAGLPHIL, GFMGYFYILTFIIGFGAIMLV, LFLGFISAVAFATILAVVAGL, VSKITVLVLGVIAIILGVLFE, IAFMVGLAFAIAASCNFPIIL, GGWLGLLTAVVLMILGPTIWV, and IFPYEYPALFSISVAFLGIWF.

Belongs to the sodium:solute symporter (SSF) (TC 2.A.21) family.

It localises to the cell inner membrane. Its function is as follows. Transports acetate. The protein is Cation/acetate symporter ActP of Salmonella gallinarum (strain 287/91 / NCTC 13346).